The following is a 369-amino-acid chain: uncharacterized protein (369 aa).

Residues 1–19 (MKKLIAVAVLSACGSLAHA) form the signal peptide.

This is an uncharacterized protein from Haemophilus influenzae (strain ATCC 51907 / DSM 11121 / KW20 / Rd).